A 540-amino-acid polypeptide reads, in one-letter code: Chaperonin GroEL 2 (540 aa).

ATP-binding positions include 29–32, 86–90, glycine 413, and aspartate 492; these read TLGP and DGTTT. The tract at residues 521–540 is disordered; sequence KPEKEKASVPGGGDMGGMDF. Gly residues predominate over residues 530–540; it reads PGGGDMGGMDF.

Belongs to the chaperonin (HSP60) family. In terms of assembly, forms a cylinder of 14 subunits composed of two heptameric rings stacked back-to-back. Interacts with the co-chaperonin GroES.

The protein resides in the secreted. The protein localises to the capsule. It is found in the cell surface. It localises to the cell wall. The enzyme catalyses ATP + H2O + a folded polypeptide = ADP + phosphate + an unfolded polypeptide.. In terms of biological role, together with its co-chaperonin GroES, plays an essential role in assisting protein folding. The GroEL-GroES system forms a nano-cage that allows encapsulation of the non-native substrate proteins and provides a physical environment optimized to promote and accelerate protein folding. This chain is Chaperonin GroEL 2, found in Mycobacterium tuberculosis (strain ATCC 25177 / H37Ra).